The following is a 257-amino-acid chain: GTP cyclohydrolase FolE2 (257 aa).

This sequence belongs to the GTP cyclohydrolase IV family.

It catalyses the reaction GTP + H2O = 7,8-dihydroneopterin 3'-triphosphate + formate + H(+). The protein operates within cofactor biosynthesis; 7,8-dihydroneopterin triphosphate biosynthesis; 7,8-dihydroneopterin triphosphate from GTP: step 1/1. Converts GTP to 7,8-dihydroneopterin triphosphate. The polypeptide is GTP cyclohydrolase FolE2 (Syntrophobacter fumaroxidans (strain DSM 10017 / MPOB)).